We begin with the raw amino-acid sequence, 650 residues long: Acetyl-coenzyme A synthetase (650 aa).

CoA-binding positions include 191-194 (RAGR), Thr-311, and Asn-335. ATP is bound by residues 387-389 (GEP), 411-416 (DTWWQT), Asp-500, and Arg-515. A CoA-binding site is contributed by Ser-523. Arg-526 is a binding site for ATP. Mg(2+)-binding residues include Val-537, His-539, and Val-542. CoA is bound at residue Arg-584. Position 609 is an N6-acetyllysine (Lys-609).

This sequence belongs to the ATP-dependent AMP-binding enzyme family. It depends on Mg(2+) as a cofactor. In terms of processing, acetylated. Deacetylation by the SIR2-homolog deacetylase activates the enzyme.

The enzyme catalyses acetate + ATP + CoA = acetyl-CoA + AMP + diphosphate. Catalyzes the conversion of acetate into acetyl-CoA (AcCoA), an essential intermediate at the junction of anabolic and catabolic pathways. AcsA undergoes a two-step reaction. In the first half reaction, AcsA combines acetate with ATP to form acetyl-adenylate (AcAMP) intermediate. In the second half reaction, it can then transfer the acetyl group from AcAMP to the sulfhydryl group of CoA, forming the product AcCoA. This Shewanella pealeana (strain ATCC 700345 / ANG-SQ1) protein is Acetyl-coenzyme A synthetase.